The primary structure comprises 512 residues: 2-isopropylmalate synthase (512 aa).

In terms of domain architecture, Pyruvate carboxyltransferase spans 5 to 267 (VVIFDTTLRD…ETSINKSEIY (263 aa)). Mn(2+) is bound by residues Asp-14, His-202, His-204, and Asn-238. Residues 391 to 512 (SLEYLHITSG…LPKAKTERAV (122 aa)) are regulatory domain.

This sequence belongs to the alpha-IPM synthase/homocitrate synthase family. LeuA type 1 subfamily. Homodimer. The cofactor is Mn(2+).

It is found in the cytoplasm. The catalysed reaction is 3-methyl-2-oxobutanoate + acetyl-CoA + H2O = (2S)-2-isopropylmalate + CoA + H(+). Its pathway is amino-acid biosynthesis; L-leucine biosynthesis; L-leucine from 3-methyl-2-oxobutanoate: step 1/4. Functionally, catalyzes the condensation of the acetyl group of acetyl-CoA with 3-methyl-2-oxobutanoate (2-ketoisovalerate) to form 3-carboxy-3-hydroxy-4-methylpentanoate (2-isopropylmalate). The polypeptide is 2-isopropylmalate synthase (Heliobacterium modesticaldum (strain ATCC 51547 / Ice1)).